The sequence spans 344 residues: GDSL esterase/lipase At2g19010 (344 aa).

A signal peptide spans 1 to 21 (MSKACWLVAAIIFTAATVVYG). The active-site Nucleophile is the Ser-33. An N-linked (GlcNAc...) asparagine glycan is attached at Asn-303. Catalysis depends on residues Asp-311 and His-314.

This sequence belongs to the 'GDSL' lipolytic enzyme family.

The protein resides in the secreted. This is GDSL esterase/lipase At2g19010 from Arabidopsis thaliana (Mouse-ear cress).